The sequence spans 501 residues: Probable malate:quinone oxidoreductase (501 aa).

It belongs to the MQO family. Requires FAD as cofactor.

It catalyses the reaction (S)-malate + a quinone = a quinol + oxaloacetate. The protein operates within carbohydrate metabolism; tricarboxylic acid cycle; oxaloacetate from (S)-malate (quinone route): step 1/1. This Geobacillus kaustophilus (strain HTA426) protein is Probable malate:quinone oxidoreductase.